An 877-amino-acid polypeptide reads, in one-letter code: TSET complex member tstB (877 aa).

Disordered regions lie at residues 398 to 437 and 522 to 557; these read HLHHYHQGGSGTVGGSVPSSSSSSSSSSNITTSALSSGSS and TGLPNPISNNNNSSNNTKDQSTTTTTSTTSSSSNSI. 2 stretches are compositionally biased toward low complexity: residues 412–437 and 529–556; these read GSVPSSSSSSSSSSNITTSALSSGSS and SNNNNSSNNTKDQSTTTTTSTTSSSSNS.

In terms of assembly, component of the TSET complex, a heterohexamer composed of tstA, tstB, tstC, tstD, tstE and tstF, which may act in plasma membrane turnover. tstA, tstB, tstC and tstD are likely to be the core complex members with tstE and tstF acting as associated scaffold proteins.

The chain is TSET complex member tstB from Dictyostelium discoideum (Social amoeba).